A 132-amino-acid chain; its full sequence is Major pollen allergen Art v 1 (132 aa).

An N-terminal signal peptide occupies residues 1 to 24 (MAKCSYVFCAVLLIFIVAIGEMEA). The defensin-like domain stretch occupies residues 28–77 (KLCEKTSKTYSGKCDNKKCDKKCIEWEKAQHGACHKREAGKESCFCYFDC). Intrachain disulfides connect cysteine 30/cysteine 77, cysteine 41/cysteine 61, cysteine 46/cysteine 71, and cysteine 50/cysteine 73. Epitope recognized by IgE antibodies of mugwort pollen-sensitized patients regions lie at residues 64 to 70 (REAGKES) and 79 to 87 (KSPPGATPA). A disordered region spans residues 81–132 (PPGATPAPPGAAPPPAAGGSPSPPADGGSPPPPADGGSPPVDGGSPPPPSTH). Positions 83 to 114 (GATPAPPGAAPPPAAGGSPSPPADGGSPPPPA) are enriched in pro residues. A compositionally biased stretch (low complexity) spans 115-124 (DGGSPPVDGG).

In the N-terminal section; belongs to the DEFL family. The mature protein extracted from the plant exhibits an average rate of 76% of hydroxyprolines. In terms of processing, O-glycosylated. O-linkage of 3 galactoses plus 9-16 or 21-23 arabinose residues attached on one or two hydroxyprolines.

The protein resides in the secreted. This Artemisia vulgaris (Mugwort) protein is Major pollen allergen Art v 1.